The following is a 59-amino-acid chain: Large ribosomal subunit protein bL32 (59 aa).

A disordered region spans residues 1-28 (MAVQQNKKSPSKRGMHRAHDFLTDPPLA).

Belongs to the bacterial ribosomal protein bL32 family.

The polypeptide is Large ribosomal subunit protein bL32 (Aromatoleum aromaticum (strain DSM 19018 / LMG 30748 / EbN1) (Azoarcus sp. (strain EbN1))).